The following is a 211-amino-acid chain: N-(5'-phosphoribosyl)anthranilate isomerase (211 aa).

This sequence belongs to the TrpF family.

The enzyme catalyses N-(5-phospho-beta-D-ribosyl)anthranilate = 1-(2-carboxyphenylamino)-1-deoxy-D-ribulose 5-phosphate. The protein operates within amino-acid biosynthesis; L-tryptophan biosynthesis; L-tryptophan from chorismate: step 3/5. This is N-(5'-phosphoribosyl)anthranilate isomerase from Methanococcus maripaludis (strain DSM 14266 / JCM 13030 / NBRC 101832 / S2 / LL).